An 827-amino-acid chain; its full sequence is MAAQTTRPVEEITAEEARAAHEALSAEIAEHDRRYHGEDAPIISDAAYDSLRRRLEAIEERFPDLAGTGAASASVGAKASDKFAKVRHAVPMLSLGNAFADEEIEEFVERVRRFLGLPASESLAVTAEPKIDGLSLSLRYEGGRLVTAATRGDGEVGEDVTANVRTIREVPERLAGPDVPEICEVRGEVYLSHADFAAINARQEEAGKPLFANPRNAAAGSLRQLDPSITASRPLRFFAYAAGEMSTWPAETQSGLIAAFRRFGLPVNPRTTRCTSVAEMLAHYRAIETERADLGYDIDGVVYKVDSFALQRRLGFVARAPRWALAHKFPAQRAVTTIEAIEINVGRTGSLNPLARLRPVTVGGVVVSNATLHNEDYVRGIDADGTPIRSGINIWDGFALRTDVDLSRGSDVRVGDTVVVLRAGDVIPKVADVVLERRPADAVPYRFPEICPACGSHAVRSYNPRTGKLDSVRRCTGGLICPAQGQERLKHFVSRNALDIEGFGETSITTLFEAGLVRQPADLFRLDFAPLKAAIVARRQALSAERALASGKAPEARKTKAKASEEDKAIRNLLAAVEARRVVPLNRFIFALGIEQVGEATAKALAKHFPDMPALMEGVRAAAAHQPGPDWVGLAALNRVGPTTRERLLAAAEAGETDLLAEGTVARLSAAQKEALLEAYGSPEGVRAAVMRACRQRPGDAYRHLADDSEIGAVTTASLIQFFSEAHNVAAVEALLAQVRTERAAPPAAAAAFSGRTVVFTGSLERMTRSEAKATAERLGAKVSGSVSAKTDLVVAGPGAGTKLKDAEKHGVRVISEAEWLAMVEAA.

NAD(+)-binding positions include 45–49 (DAAYD), 94–95 (SL), and Glu128. Catalysis depends on Lys130, which acts as the N6-AMP-lysine intermediate. Arg151, Glu188, Lys304, and Lys328 together coordinate NAD(+). Zn(2+)-binding residues include Cys451, Cys454, Cys475, and Cys481. The BRCT domain maps to 748-827 (AAAAAFSGRT…AEWLAMVEAA (80 aa)).

This sequence belongs to the NAD-dependent DNA ligase family. LigA subfamily. Mg(2+) serves as cofactor. Mn(2+) is required as a cofactor.

It catalyses the reaction NAD(+) + (deoxyribonucleotide)n-3'-hydroxyl + 5'-phospho-(deoxyribonucleotide)m = (deoxyribonucleotide)n+m + AMP + beta-nicotinamide D-nucleotide.. Functionally, DNA ligase that catalyzes the formation of phosphodiester linkages between 5'-phosphoryl and 3'-hydroxyl groups in double-stranded DNA using NAD as a coenzyme and as the energy source for the reaction. It is essential for DNA replication and repair of damaged DNA. The chain is DNA ligase from Methylobacterium sp. (strain 4-46).